The primary structure comprises 294 residues: Bifunctional protein FolD (294 aa).

NADP(+) contacts are provided by residues 166-168 (GRS), Ser-191, and Ile-232.

This sequence belongs to the tetrahydrofolate dehydrogenase/cyclohydrolase family. In terms of assembly, homodimer.

It carries out the reaction (6R)-5,10-methylene-5,6,7,8-tetrahydrofolate + NADP(+) = (6R)-5,10-methenyltetrahydrofolate + NADPH. The catalysed reaction is (6R)-5,10-methenyltetrahydrofolate + H2O = (6R)-10-formyltetrahydrofolate + H(+). It functions in the pathway one-carbon metabolism; tetrahydrofolate interconversion. Catalyzes the oxidation of 5,10-methylenetetrahydrofolate to 5,10-methenyltetrahydrofolate and then the hydrolysis of 5,10-methenyltetrahydrofolate to 10-formyltetrahydrofolate. The protein is Bifunctional protein FolD of Nitrobacter hamburgensis (strain DSM 10229 / NCIMB 13809 / X14).